Here is a 379-residue protein sequence, read N- to C-terminus: tRNA (guanine(26)-N(2))-dimethyltransferase (379 aa).

Residues 1 to 26 are disordered; it reads MECREITEGSTTFTAPVQDETTQFPP. The 366-residue stretch at 4–369 folds into the Trm1 methyltransferase domain; the sequence is REITEGSTTF…APLPLIEEKI (366 aa). Residues 8–25 show a composition bias toward polar residues; it reads EGSTTFTAPVQDETTQFP. S-adenosyl-L-methionine is bound by residues Arg41, Arg66, Asp82, Asp108, and Ala109. Zn(2+)-binding residues include Cys237, Cys240, Cys257, and Cys260.

This sequence belongs to the class I-like SAM-binding methyltransferase superfamily. Trm1 family.

The catalysed reaction is guanosine(26) in tRNA + 2 S-adenosyl-L-methionine = N(2)-dimethylguanosine(26) in tRNA + 2 S-adenosyl-L-homocysteine + 2 H(+). In terms of biological role, dimethylates a single guanine residue at position 26 of a number of tRNAs using S-adenosyl-L-methionine as donor of the methyl groups. The chain is tRNA (guanine(26)-N(2))-dimethyltransferase from Methanocorpusculum labreanum (strain ATCC 43576 / DSM 4855 / Z).